A 496-amino-acid chain; its full sequence is MTTITKAACIGGGVIGGAWAARFALAGIDVNIFDPHPEAERIIGEVMANAERAYGMLTMAPLPPRGKFTFCRSIQEAVEGVDWIQESVPERLPLKRGVINEIDAAARPDALIGSSTSGLLPSDLQAEMKHPERMFVAHPYNPVYLLPLVELVGGRKTSPETIRRAEEAVAEIGMKGVVIAKEIEAFVGDRLLEALWREALWLIQDDICDTETLDDVMRYSFGMRWAQMGLFETYRIAGGEAGMRHFLAQFGPCLKWPWTKFTDVVDLDDALVEKIGAQSDAQAAGRSIRELERIRDENLVGIMHALKAGDGGKGWGAGKLLADFEKRLWEKGGSPSKSLDASGPLRLVDTKVNAAWVDYNGHMTEHRYLQLFGDTSDALLKVIGVDFAYVEAGHSYYTVETHIRHLGEAKLGQALYTTLQLLSSDEKRIHFFTRIHDAASGDVIATAEQMMLHVDAKAGKSVPAPAEVMAKLKPIAEGHAKLDAPDGAGRHVGQKR.

The interval 1–335 (MTTITKAACI…KRLWEKGGSP (335 aa)) is L-carnitine dehydrogenase. NAD(+) is bound at residue 11–16 (GGGVIG). A betainyl-CoA thioesterase region spans residues 336–496 (SKSLDASGPL…GAGRHVGQKR (161 aa)).

This sequence in the N-terminal section; belongs to the 3-hydroxyacyl-CoA dehydrogenase family. L-carnitine dehydrogenase subfamily. In the C-terminal section; belongs to the betainyl-CoA thioesterase family. As to quaternary structure, homodimer.

The protein resides in the cytoplasm. It catalyses the reaction carnitine + NAD(+) = 3-dehydrocarnitine + NADH + H(+). The catalysed reaction is N,N,N-trimethylglycyl-CoA + H2O = glycine betaine + CoA + H(+). It functions in the pathway amine and polyamine metabolism; carnitine metabolism. Its function is as follows. Multifunctional enzyme that catalyzes the NAD(+)-dependent oxidation of L-carnitine to 3-dehydrocarnitine and the cleavage of betainyl-CoA (N,N,N-trimethylglycyl-CoA) into glycine betaine and coenzyme A. Can also hydrolyze L-carnitinyl-CoA, but with much lower efficiency. Is involved in a L-carnitine degradation pathway that allows R.meliloti to grow on L-carnitine as the sole source of carbon and nitrogen. This chain is L-carnitine dehydrogenase/betainyl-CoA thioesterase, found in Rhizobium meliloti (strain 1021) (Ensifer meliloti).